Consider the following 182-residue polypeptide: Urease accessory protein UreE (182 aa).

The interval 128–182 (PRTEPFRPEGGAYGHGRTLGHDHGPAQGHGHDHPHVHVHISHKPDEDETPDADPA) is disordered. The span at 146-162 (LGHDHGPAQGHGHDHPH) shows a compositional bias: basic and acidic residues. Acidic residues predominate over residues 173 to 182 (EDETPDADPA).

This sequence belongs to the UreE family.

The protein resides in the cytoplasm. Its function is as follows. Involved in urease metallocenter assembly. Binds nickel. Probably functions as a nickel donor during metallocenter assembly. In Cereibacter sphaeroides (strain ATCC 17023 / DSM 158 / JCM 6121 / CCUG 31486 / LMG 2827 / NBRC 12203 / NCIMB 8253 / ATH 2.4.1.) (Rhodobacter sphaeroides), this protein is Urease accessory protein UreE.